Here is a 132-residue protein sequence, read N- to C-terminus: Ribosome-binding factor A (132 aa).

Belongs to the RbfA family. Monomer. Binds 30S ribosomal subunits, but not 50S ribosomal subunits or 70S ribosomes.

The protein localises to the cytoplasm. In terms of biological role, one of several proteins that assist in the late maturation steps of the functional core of the 30S ribosomal subunit. Associates with free 30S ribosomal subunits (but not with 30S subunits that are part of 70S ribosomes or polysomes). Required for efficient processing of 16S rRNA. May interact with the 5'-terminal helix region of 16S rRNA. This is Ribosome-binding factor A from Prochlorococcus marinus subsp. pastoris (strain CCMP1986 / NIES-2087 / MED4).